Consider the following 479-residue polypeptide: Zinc metalloproteinase/disintegrin PMMP-1 (479 aa).

An N-terminal signal peptide occupies residues 1–20 (MIQVLLVTICLAVFPYQGSS). Positions 21–188 (IILESGNVND…PIKKASKLVV (168 aa)) are excised as a propeptide. In terms of domain architecture, Peptidase M12B spans 194–390 (RYVELVIVAD…HNPQCILNKP (197 aa)). 3 disulfide bridges follow: Cys305-Cys385, Cys345-Cys369, and Cys347-Cys352. His330 is a binding site for Zn(2+). The active site involves Glu331. Residues His334 and His339 each coordinate Zn(2+). The N-linked (GlcNAc...) asparagine glycan is linked to Asn368. The propeptide occupies 391–408 (LRTDTVSTPVSGNELLEA). The region spanning 398-479 (TPVSGNELLE…ADCPRNGLYG (82 aa)) is the Disintegrin domain. Cystine bridges form between Cys412-Cys427, Cys414-Cys422, Cys421-Cys444, Cys435-Cys441, Cys440-Cys465, and Cys453-Cys472. The short motif at 457-459 (RGD) is the Cell attachment site element.

This sequence belongs to the venom metalloproteinase (M12B) family. P-II subfamily. P-IIa sub-subfamily. Monomer. It depends on Zn(2+) as a cofactor. In terms of tissue distribution, expressed by the venom gland.

The protein localises to the secreted. In terms of biological role, impairs hemostasis in the envenomed animal. Its function is as follows. Inhibits platelet aggregation. The chain is Zinc metalloproteinase/disintegrin PMMP-1 from Protobothrops mucrosquamatus (Taiwan habu).